Consider the following 968-residue polypeptide: C-1-tetrahydrofolate synthase, cytoplasmic (968 aa).

A methylenetetrahydrofolate dehydrogenase and cyclohydrolase region spans residues 1–338 (MSAQYQRFLK…ERLAKSQWAL (338 aa)). Substrate-binding positions include 86–90 (YIRMK) and 133–135 (VQM). Residues 205–207 (GRS) and S230 contribute to the NADP(+) site. 305 to 309 (PGGVG) contacts substrate. The formyltetrahydrofolate synthetase stretch occupies residues 339-968 (QTLPLKPQRP…TETGEIEGLF (630 aa)). 413–420 (TPLGEGKT) lines the ATP pocket.

In the N-terminal section; belongs to the tetrahydrofolate dehydrogenase/cyclohydrolase family. This sequence in the C-terminal section; belongs to the formate--tetrahydrofolate ligase family. As to quaternary structure, homodimer. In terms of tissue distribution, present in all tissues.

The protein localises to the cytoplasm. It catalyses the reaction (6R)-5,10-methylene-5,6,7,8-tetrahydrofolate + NADP(+) = (6R)-5,10-methenyltetrahydrofolate + NADPH. It carries out the reaction (6R)-5,10-methenyltetrahydrofolate + H2O = (6R)-10-formyltetrahydrofolate + H(+). The enzyme catalyses (6S)-5,6,7,8-tetrahydrofolate + formate + ATP = (6R)-10-formyltetrahydrofolate + ADP + phosphate. It functions in the pathway one-carbon metabolism; tetrahydrofolate interconversion. This is C-1-tetrahydrofolate synthase, cytoplasmic (pug) from Drosophila melanogaster (Fruit fly).